A 157-amino-acid chain; its full sequence is Ribosome maturation factor RimP (157 aa).

The protein belongs to the RimP family.

Its subcellular location is the cytoplasm. Functionally, required for maturation of 30S ribosomal subunits. This is Ribosome maturation factor RimP from Geobacillus kaustophilus (strain HTA426).